The sequence spans 334 residues: Thiamine-binding periplasmic protein (334 aa).

Positions 1 to 23 are cleaved as a signal peptide; sequence MRLLSLLTFSLFAVIGLAPAAQA. Thiamine contacts are provided by residues 64–65, 166–167, Trp-202, and 220–223; these read DG, AT, and YTTS.

It belongs to the bacterial solute-binding protein 1 family. As to quaternary structure, the complex is composed of two ATP-binding proteins (ThiQ), two transmembrane proteins (ThiP) and a solute-binding protein (ThiB).

It is found in the periplasm. Part of the ABC transporter complex ThiBPQ involved in thiamine import. This Brucella melitensis biotype 1 (strain ATCC 23456 / CCUG 17765 / NCTC 10094 / 16M) protein is Thiamine-binding periplasmic protein (thiB).